The following is a 282-amino-acid chain: Probable endonuclease 4 (282 aa).

Zn(2+)-binding residues include H69, H109, E145, D179, H182, H216, D229, H231, and E261.

Belongs to the AP endonuclease 2 family. Zn(2+) serves as cofactor.

It carries out the reaction Endonucleolytic cleavage to 5'-phosphooligonucleotide end-products.. Endonuclease IV plays a role in DNA repair. It cleaves phosphodiester bonds at apurinic or apyrimidinic (AP) sites, generating a 3'-hydroxyl group and a 5'-terminal sugar phosphate. The protein is Probable endonuclease 4 of Edwardsiella ictaluri (strain 93-146).